Consider the following 371-residue polypeptide: Dual-specificity RNA methyltransferase RlmN (371 aa).

The active-site Proton acceptor is Glu86. Positions 105–338 constitute a Radical SAM core domain; sequence RHARYTICVS…CTIRQSKGLD (234 aa). Cys112 and Cys343 are joined by a disulfide. Cys119, Cys123, and Cys126 together coordinate [4Fe-4S] cluster. S-adenosyl-L-methionine contacts are provided by residues 169-170, Ser201, 224-226, and Asn300; these read GE and SLH. The S-methylcysteine intermediate role is filled by Cys343. Residues 348–363 are compositionally biased toward polar residues; it reads QRSQNLSPSNNNTSKP. The segment at 348 to 371 is disordered; that stretch reads QRSQNLSPSNNNTSKPSDIKKSES.

Belongs to the radical SAM superfamily. RlmN family. It depends on [4Fe-4S] cluster as a cofactor.

It localises to the cytoplasm. The enzyme catalyses adenosine(2503) in 23S rRNA + 2 reduced [2Fe-2S]-[ferredoxin] + 2 S-adenosyl-L-methionine = 2-methyladenosine(2503) in 23S rRNA + 5'-deoxyadenosine + L-methionine + 2 oxidized [2Fe-2S]-[ferredoxin] + S-adenosyl-L-homocysteine. The catalysed reaction is adenosine(37) in tRNA + 2 reduced [2Fe-2S]-[ferredoxin] + 2 S-adenosyl-L-methionine = 2-methyladenosine(37) in tRNA + 5'-deoxyadenosine + L-methionine + 2 oxidized [2Fe-2S]-[ferredoxin] + S-adenosyl-L-homocysteine. Functionally, specifically methylates position 2 of adenine 2503 in 23S rRNA and position 2 of adenine 37 in tRNAs. m2A2503 modification seems to play a crucial role in the proofreading step occurring at the peptidyl transferase center and thus would serve to optimize ribosomal fidelity. The sequence is that of Dual-specificity RNA methyltransferase RlmN from Campylobacter curvus (strain 525.92).